The chain runs to 305 residues: Nuclear egress protein 1 (305 aa).

A disordered region spans residues 1–42 (MYDIAPRRSGSRPGPGRDKTRRRSRFSAAGNPGVERRASRKS). A CCCH-type zinc finger spans residues 105 to 224 (CLTLSGMGYY…YVIFPGTSAH (120 aa)).

The protein belongs to the herpesviridae NEC1 protein family. In terms of assembly, forms a heterohexameric complex with NEC2. Interacts with capsid vertex specific component 2/CVC2; this interaction directs the capsid to the host inner nuclear membrane to initiate budding. In terms of processing, phosphorylated at serine residues in the N-terminus. This phosphorylation regulates the localization within the inner nuclear membrane.

The protein resides in the host nucleus inner membrane. Its function is as follows. Plays an essential role in virion nuclear egress, the first step of virion release from infected cell. Within the host nucleus, NEC1 interacts with the newly formed capsid through the vertexes and directs it to the inner nuclear membrane by associating with NEC2. Induces the budding of the capsid at the inner nuclear membrane as well as its envelopment into the perinuclear space. There, the NEC1/NEC2 complex promotes the fusion of the enveloped capsid with the outer nuclear membrane and the subsequent release of the viral capsid into the cytoplasm where it will reach the secondary budding sites in the host Golgi or trans-Golgi network. In Human herpesvirus 2 (strain HG52) (HHV-2), this protein is Nuclear egress protein 1.